Reading from the N-terminus, the 685-residue chain is Polyphosphate kinase (685 aa).

Residue Asn45 participates in ATP binding. Positions 375 and 405 each coordinate Mg(2+). The active-site Phosphohistidine intermediate is the His435. ATP is bound by residues Tyr468, Arg564, and His592.

Belongs to the polyphosphate kinase 1 (PPK1) family. The cofactor is Mg(2+). An intermediate of this reaction is the autophosphorylated ppk in which a phosphate is covalently linked to a histidine residue through a N-P bond.

The catalysed reaction is [phosphate](n) + ATP = [phosphate](n+1) + ADP. Catalyzes the reversible transfer of the terminal phosphate of ATP to form a long-chain polyphosphate (polyP). The sequence is that of Polyphosphate kinase from Neisseria meningitidis serogroup C (strain 053442).